Here is a 923-residue protein sequence, read N- to C-terminus: Isoleucine--tRNA ligase (923 aa).

The 'HIGH' region signature appears at proline 57–histidine 67. Residue glutamate 560 participates in L-isoleucyl-5'-AMP binding. The 'KMSKS' region signature appears at lysine 601–serine 605. Residue lysine 604 coordinates ATP. Zn(2+)-binding residues include cysteine 895, cysteine 898, cysteine 915, and cysteine 918.

It belongs to the class-I aminoacyl-tRNA synthetase family. IleS type 1 subfamily. Monomer. Zn(2+) is required as a cofactor.

It is found in the cytoplasm. The enzyme catalyses tRNA(Ile) + L-isoleucine + ATP = L-isoleucyl-tRNA(Ile) + AMP + diphosphate. In terms of biological role, catalyzes the attachment of isoleucine to tRNA(Ile). As IleRS can inadvertently accommodate and process structurally similar amino acids such as valine, to avoid such errors it has two additional distinct tRNA(Ile)-dependent editing activities. One activity is designated as 'pretransfer' editing and involves the hydrolysis of activated Val-AMP. The other activity is designated 'posttransfer' editing and involves deacylation of mischarged Val-tRNA(Ile). This chain is Isoleucine--tRNA ligase, found in Geobacter sulfurreducens (strain ATCC 51573 / DSM 12127 / PCA).